Here is a 292-residue protein sequence, read N- to C-terminus: Small ribosomal subunit biogenesis GTPase RsgA (292 aa).

The CP-type G domain occupies 62–213 (KNSLVRPPIV…IADTPGFSSL (152 aa)). GTP is bound by residues 111–114 (SKMD) and 156–164 (GQTGVGKST). Zn(2+) contacts are provided by cysteine 237, cysteine 242, histidine 244, and cysteine 250.

The protein belongs to the TRAFAC class YlqF/YawG GTPase family. RsgA subfamily. As to quaternary structure, monomer. Associates with 30S ribosomal subunit, binds 16S rRNA. It depends on Zn(2+) as a cofactor.

The protein resides in the cytoplasm. Functionally, one of several proteins that assist in the late maturation steps of the functional core of the 30S ribosomal subunit. Helps release RbfA from mature subunits. May play a role in the assembly of ribosomal proteins into the subunit. Circularly permuted GTPase that catalyzes slow GTP hydrolysis, GTPase activity is stimulated by the 30S ribosomal subunit. The sequence is that of Small ribosomal subunit biogenesis GTPase RsgA from Streptococcus pneumoniae serotype 4 (strain ATCC BAA-334 / TIGR4).